The sequence spans 512 residues: NAD(P)H-quinone oxidoreductase subunit 2, organellar chromatophore (512 aa).

Transmembrane regions (helical) follow at residues 6–26 (LLAL…LLAL), 43–63 (WVPP…ASQW), 80–100 (LAIA…MISW), 107–127 (GAPM…AMFL), 133–153 (LVSI…LAGY), 168–188 (LLVG…LYGL), 210–230 (AALA…AVPF), 242–262 (PTPI…ALAL), 276–296 (WKFL…IVAL), 304–324 (MLAY…VCGT), 332–352 (ILYL…VILF), 376–396 (IGLS…GFFG), 411–431 (LLVV…ISVI), and 464–484 (VALL…NPLF).

Belongs to the complex I subunit 2 family. NDH-1 can be composed of about 15 different subunits; different subcomplexes with different compositions have been identified which probably have different functions.

It is found in the plastid. It localises to the organellar chromatophore thylakoid membrane. The catalysed reaction is a plastoquinone + NADH + (n+1) H(+)(in) = a plastoquinol + NAD(+) + n H(+)(out). It carries out the reaction a plastoquinone + NADPH + (n+1) H(+)(in) = a plastoquinol + NADP(+) + n H(+)(out). Functionally, NDH-1 shuttles electrons from an unknown electron donor, via FMN and iron-sulfur (Fe-S) centers, to quinones in the respiratory and/or the photosynthetic chain. The immediate electron acceptor for the enzyme in this species is believed to be plastoquinone. Couples the redox reaction to proton translocation, and thus conserves the redox energy in a proton gradient. Cyanobacterial NDH-1 also plays a role in inorganic carbon-concentration. The polypeptide is NAD(P)H-quinone oxidoreductase subunit 2, organellar chromatophore (Paulinella chromatophora).